Here is a 241-residue protein sequence, read N- to C-terminus: Probable septum site-determining protein MinC (241 aa).

The protein belongs to the MinC family. As to quaternary structure, interacts with MinD and FtsZ.

In terms of biological role, cell division inhibitor that blocks the formation of polar Z ring septums. Rapidly oscillates between the poles of the cell to destabilize FtsZ filaments that have formed before they mature into polar Z rings. Prevents FtsZ polymerization. The chain is Probable septum site-determining protein MinC from Rhizobium rhizogenes (strain K84 / ATCC BAA-868) (Agrobacterium radiobacter).